Reading from the N-terminus, the 170-residue chain is Small ribosomal subunit protein bS16 (170 aa).

The disordered stretch occupies residues 114–170; it reads EGGPTTEAAKPKKKAATSGAKKAAKAAEPEAAAPEAAEPEAAAPAEGGEQAESSTES. Residues 142–170 show a composition bias toward low complexity; it reads PEAAAPEAAEPEAAAPAEGGEQAESSTES.

This sequence belongs to the bacterial ribosomal protein bS16 family.

This Mycobacterium avium (strain 104) protein is Small ribosomal subunit protein bS16.